A 92-amino-acid polypeptide reads, in one-letter code: Small ribosomal subunit protein uS19 (92 aa).

It belongs to the universal ribosomal protein uS19 family.

Protein S19 forms a complex with S13 that binds strongly to the 16S ribosomal RNA. In Polaromonas naphthalenivorans (strain CJ2), this protein is Small ribosomal subunit protein uS19.